A 356-amino-acid polypeptide reads, in one-letter code: L-Lys-D/L-Arg epimerase (356 aa).

Substrate contacts are provided by residues Thr-135 and 160–162 (KVK). Residues Asp-190, Glu-216, and Asp-241 each contribute to the Mg(2+) site. Substrate is bound by residues Lys-266, Asp-296, and 319-321 (DLD).

It belongs to the mandelate racemase/muconate lactonizing enzyme family. It depends on Mg(2+) as a cofactor.

Functionally, catalyzes the epimerization of L-Lys-L-Arg to L-Lys-D-Arg. Can also catalyze the epimerization of other cationic dipeptides, such as L-Arg-L-Arg, L-Lys-L-Lys and L-Lys-L-His, but with lower efficiency (in vitro). This is L-Lys-D/L-Arg epimerase from Methylococcus capsulatus (strain ATCC 33009 / NCIMB 11132 / Bath).